Consider the following 249-residue polypeptide: Putative ABC transporter ATP-binding protein GSU1281 (249 aa).

In terms of domain architecture, ABC transporter spans 6–236 (VEVRDLCHCY…DELLATCRLE (231 aa)). 39-46 (GANGAGKS) is an ATP binding site.

This sequence belongs to the ABC transporter superfamily.

It localises to the cell inner membrane. In terms of biological role, probably part of an ABC transporter complex. Responsible for energy coupling to the transport system. The chain is Putative ABC transporter ATP-binding protein GSU1281 from Geobacter sulfurreducens (strain ATCC 51573 / DSM 12127 / PCA).